Reading from the N-terminus, the 302-residue chain is Melibiose operon regulatory protein (302 aa).

Residues 194–292 enclose the HTH araC/xylS-type domain; the sequence is SQMLGFIAEN…GMSPQQYRKL (99 aa). 2 consecutive DNA-binding regions (H-T-H motif) follow at residues 211–232 and 259–282; these read NDVAEHVKLNANYAMGIFQRVM and ILDIALTAGFRSSSRFYSTFGKYV.

Functionally, transcription activator for the expression of the melAB operon. MelR binds at two sites located upstream of the melAB transcription site. This Escherichia coli O6:H1 (strain CFT073 / ATCC 700928 / UPEC) protein is Melibiose operon regulatory protein (melR).